Reading from the N-terminus, the 190-residue chain is dTTP/UTP pyrophosphatase (190 aa).

Residue Asp71 is the Proton acceptor of the active site.

This sequence belongs to the Maf family. YhdE subfamily. A divalent metal cation is required as a cofactor.

It is found in the cytoplasm. The enzyme catalyses dTTP + H2O = dTMP + diphosphate + H(+). It catalyses the reaction UTP + H2O = UMP + diphosphate + H(+). Functionally, nucleoside triphosphate pyrophosphatase that hydrolyzes dTTP and UTP. May have a dual role in cell division arrest and in preventing the incorporation of modified nucleotides into cellular nucleic acids. In Xanthomonas euvesicatoria pv. vesicatoria (strain 85-10) (Xanthomonas campestris pv. vesicatoria), this protein is dTTP/UTP pyrophosphatase.